The sequence spans 432 residues: 3-phosphoshikimate 1-carboxyvinyltransferase (432 aa).

3-phosphoshikimate-binding residues include K23, S24, and R28. Residue K23 participates in phosphoenolpyruvate binding. Residues G99 and R127 each contribute to the phosphoenolpyruvate site. 7 residues coordinate 3-phosphoshikimate: S172, S173, Q174, S200, D317, N341, and K345. Residue Q174 coordinates phosphoenolpyruvate. D317 serves as the catalytic Proton acceptor. Phosphoenolpyruvate-binding residues include R349, R391, and K416.

The protein belongs to the EPSP synthase family. In terms of assembly, monomer.

The protein localises to the cytoplasm. The catalysed reaction is 3-phosphoshikimate + phosphoenolpyruvate = 5-O-(1-carboxyvinyl)-3-phosphoshikimate + phosphate. Its pathway is metabolic intermediate biosynthesis; chorismate biosynthesis; chorismate from D-erythrose 4-phosphate and phosphoenolpyruvate: step 6/7. Its function is as follows. Catalyzes the transfer of the enolpyruvyl moiety of phosphoenolpyruvate (PEP) to the 5-hydroxyl of shikimate-3-phosphate (S3P) to produce enolpyruvyl shikimate-3-phosphate and inorganic phosphate. This is 3-phosphoshikimate 1-carboxyvinyltransferase from Blochmanniella pennsylvanica (strain BPEN).